The primary structure comprises 1249 residues: LRR receptor-like serine/threonine-protein kinase GSO1 (1249 aa).

The first 18 residues, 1–18 (MQPLVLLLLFILCFSGLG), serve as a signal peptide directing secretion. Residues 19 to 876 (QPGIINNDLQ…QQGLSARSVV (858 aa)) are Extracellular-facing. Asn77 and Asn117 each carry an N-linked (GlcNAc...) asparagine glycan. LRR repeat units lie at residues 94-118 (FDNL…LSNL), 119-142 (TSLE…LGSL), 144-166 (NIRS…LGNL), 168-190 (NLQM…LGRL), 191-214 (VRVQ…LGNC), 216-238 (DLTV…LGRL), 239-262 (ENLE…LGEM), 264-285 (QLQY…SLAD), 286-310 (LGNL…FWNM), 312-334 (QLLD…ICSN), 336-359 (TNLE…LSKC), 360-383 (QSLK…LFEL), 385-407 (ELTD…ISNL), 408-431 (TNLQ…ISAL), 433-455 (KLEV…IGNC), 457-479 (SLKM…IGRL), 480-503 (KELN…LGNC), 505-527 (QLNI…FGFL), 528-551 (KGLE…LISL), 553-574 (NLTR…LCGS), 576-598 (SYLS…LGNS), 599-622 (QNLD…LGKI), 623-646 (RELS…LVLC), 648-670 (KLTH…LGKL), 671-694 (SQLG…LFNC), 696-718 (KLLV…IGNL), 719-742 (GALN…MGKL), 744-766 (KLYE…IGQL), 767-791 (QDLQ…IGTL), 792-815 (SKLE…VGDM), and 817-838 (SLGY…QFSR). Asn213, Asn228, and Asn248 each carry an N-linked (GlcNAc...) asparagine glycan. 3 N-linked (GlcNAc...) asparagine glycosylation sites follow: Asn298, Asn309, and Asn334. N-linked (GlcNAc...) asparagine glycosylation is found at Asn369, Asn393, and Asn406. A glycan (N-linked (GlcNAc...) asparagine) is linked at Asn454. 4 N-linked (GlcNAc...) asparagine glycosylation sites follow: Asn537, Asn553, Asn558, and Asn565. N-linked (GlcNAc...) asparagine glycans are attached at residues Asn693 and Asn708. N-linked (GlcNAc...) asparagine glycosylation is present at Asn779. A glycan (N-linked (GlcNAc...) asparagine) is linked at Asn822. A helical transmembrane segment spans residues 877–897 (IISAISALTAIGLMILVIALF). Residues 898–1249 (FKQRHDFFKK…NNRTAGYKKL (352 aa)) are Cytoplasmic-facing. The residue at position 948 (Thr948) is a Phosphothreonine. One can recognise a Protein kinase domain in the interval 951 to 1240 (LSEEFMIGSG…ACDSLLHVYN (290 aa)). ATP-binding positions include 957 to 965 (IGSGGSGKV) and Lys979. Phosphotyrosine is present on residues Tyr1027 and Tyr1071. The active-site Proton acceptor is Asp1084. 2 positions are modified to phosphotyrosine: Tyr1129 and Tyr1136.

The protein belongs to the protein kinase superfamily. Ser/Thr protein kinase family. In terms of assembly, interacts with CIF1 and CIF2. In terms of tissue distribution, mostly expressed in siliques, seeds, developing embryos and seedlings, detected in flower buds and roots, but not in leaves or stems.

It is found in the cell membrane. It carries out the reaction L-seryl-[protein] + ATP = O-phospho-L-seryl-[protein] + ADP + H(+). It catalyses the reaction L-threonyl-[protein] + ATP = O-phospho-L-threonyl-[protein] + ADP + H(+). In terms of biological role, together with GSO2, receptor-like serine/threonine-kinase required during the development of the epidermal surface in embryos and cotyledons. In coordination with GSO2, regulates root growth through control of cell division and cell fate specification. Controls seedling root growth by modulating sucrose response after germination. Receptor of the peptide hormones CIF1 and CIF2 required for contiguous Casparian strip diffusion barrier formation in roots. Required for localizing CASP proteins into the Casparian strip following an uninterrupted, ring-like domain, to trigger endodermal differentiation and thus regulate potassium ion (K) homeostasis. Involved in the maintenance of water transport and root pressure. May also be involved in the regulation of suberin accumulation in the endodermis. The chain is LRR receptor-like serine/threonine-protein kinase GSO1 from Arabidopsis thaliana (Mouse-ear cress).